Reading from the N-terminus, the 275-residue chain is Large ribosomal subunit protein uL2 (275 aa).

Residues Asp35 to Ile49 are compositionally biased toward polar residues. 2 disordered regions span residues Asp35–Lys59 and Ala224–Arg275. Residues Thr50–Lys59 show a composition bias toward basic residues.

Belongs to the universal ribosomal protein uL2 family. In terms of assembly, part of the 50S ribosomal subunit. Forms a bridge to the 30S subunit in the 70S ribosome.

One of the primary rRNA binding proteins. Required for association of the 30S and 50S subunits to form the 70S ribosome, for tRNA binding and peptide bond formation. It has been suggested to have peptidyltransferase activity; this is somewhat controversial. Makes several contacts with the 16S rRNA in the 70S ribosome. The sequence is that of Large ribosomal subunit protein uL2 from Burkholderia orbicola (strain AU 1054).